Here is a 583-residue protein sequence, read N- to C-terminus: Peptidyl-prolyl cis-trans isomerase FKBP10 (583 aa).

The first 27 residues, 1–27, serve as a signal peptide directing secretion; the sequence is MLRAGPPSHTLLRLPLLQLLLLLLVQA. PPIase FKBP-type domains lie at 63–151, 175–263, 287–375, and 400–487; these read GDFV…LDVW, SDFV…IDVH, GDFM…IDFH, and GDFV…VSRE. 3 N-linked (GlcNAc...) asparagine glycosylation sites follow: asparagine 71, asparagine 183, and asparagine 295. 2 consecutive EF-hand domains span residues 498–533 and 543–578; these read WHEDPPAHLFEHMDLNKDGEVPVEEFSTFIKAQVSE and DPEKTIGDMFQNQDRNQDGKITAEELKLKSDEDQDR. The Ca(2+) site is built by aspartate 511, asparagine 513, aspartate 515, glutamate 517, glutamate 522, aspartate 556, asparagine 558, aspartate 560, lysine 562, and glutamate 567. The interval 534–583 is disordered; it reads GKGRLLPGQDPEKTIGDMFQNQDRNQDGKITAEELKLKSDEDQDRVHEEL. Basic and acidic residues predominate over residues 557-583; that stretch reads RNQDGKITAEELKLKSDEDQDRVHEEL. The short motif at 580-583 is the Prevents secretion from ER element; it reads HEEL.

Post-translationally, glycosylated and phosphorylated.

It is found in the endoplasmic reticulum lumen. It carries out the reaction [protein]-peptidylproline (omega=180) = [protein]-peptidylproline (omega=0). With respect to regulation, inhibited by both FK506 and rapamycin, but not by cyclosporin A. Functionally, PPIases accelerate the folding of proteins during protein synthesis. In Bos taurus (Bovine), this protein is Peptidyl-prolyl cis-trans isomerase FKBP10 (FKBP10).